Reading from the N-terminus, the 150-residue chain is Aspartate 1-decarboxylase (150 aa).

Residue S24 is the Schiff-base intermediate with substrate; via pyruvic acid of the active site. Pyruvic acid (Ser) is present on S24. Residue T56 participates in substrate binding. The active-site Proton donor is the Y57. Residue 72 to 74 participates in substrate binding; sequence GAA.

It belongs to the PanD family. In terms of assembly, heterooctamer of four alpha and four beta subunits. Requires pyruvate as cofactor. Post-translationally, is synthesized initially as an inactive proenzyme, which is activated by self-cleavage at a specific serine bond to produce a beta-subunit with a hydroxyl group at its C-terminus and an alpha-subunit with a pyruvoyl group at its N-terminus.

Its subcellular location is the cytoplasm. It catalyses the reaction L-aspartate + H(+) = beta-alanine + CO2. It participates in cofactor biosynthesis; (R)-pantothenate biosynthesis; beta-alanine from L-aspartate: step 1/1. Functionally, catalyzes the pyruvoyl-dependent decarboxylation of aspartate to produce beta-alanine. The chain is Aspartate 1-decarboxylase from Xanthobacter autotrophicus (strain ATCC BAA-1158 / Py2).